Here is a 247-residue protein sequence, read N- to C-terminus: Killer cell lectin-like receptor subfamily I member 2 (247 aa).

The span at 1 to 12 (MPRKKQNERGTN) shows a compositional bias: basic and acidic residues. Residues 1–39 (MPRKKQNERGTNKQEIINIETKSSTFQEKQRQSKTDQIS) are disordered. Over 1-79 (MPRKKQNERG…GTDPWLTTWR (79 aa)) the chain is Cytoplasmic. Residues 80-100 (IITVILGTSCIILVTKVGFLI) traverse the membrane as a helical segment. The Extracellular portion of the chain corresponds to 101-247 (PNLFSRGEKR…KAYTCEFNLQ (147 aa)). N-linked (GlcNAc...) asparagine glycans are attached at residues Asn125, Asn196, Asn212, and Asn218. The C-type lectin domain occupies 139–243 (FGNNFYLFFR…CSSKKAYTCE (105 aa)). 2 cysteine pairs are disulfide-bonded: Cys160-Cys242 and Cys221-Cys234.

Heterodimer with KLRE1. Expressed in natural killer (NK) cells.

It localises to the cell membrane. Functionally, lectin-like receptor for natural killer (NK) cells. Heterodimer formation with KLRE1 mediates NK cell cytolytic activity. This Rattus norvegicus (Rat) protein is Killer cell lectin-like receptor subfamily I member 2.